A 251-amino-acid polypeptide reads, in one-letter code: MNEAVKTLDGWFCLHDFRSIDWAAWRELNPGNQELMLNELSHFLSDMEITKNIGEGEHTIYSILGQKADLVFFTLRDSLEALNEVENRFNKLAIADYLLPTYSYISVVELSNYLASHMAGGEDPYQNKGVRARLYPALPPKKHICFYPMSKKRDGADNWYMLPMEERQKLIRDHGLIGRSYAGKVQQIIGGSIGFDDYEWGVTLFSDDALEFKRIVTEMRFDEASARYAEFGSFFIGNLLPSENLSKLFTI.

Fe-coproporphyrin III contacts are provided by residues R133, 147 to 151, H174, Q187, and S225; that span reads YPMSK. Y147 is a catalytic residue.

It belongs to the ChdC family. Type 1 subfamily. Fe-coproporphyrin III is required as a cofactor.

It carries out the reaction Fe-coproporphyrin III + 2 H2O2 + 2 H(+) = heme b + 2 CO2 + 4 H2O. The catalysed reaction is Fe-coproporphyrin III + H2O2 + H(+) = harderoheme III + CO2 + 2 H2O. It catalyses the reaction harderoheme III + H2O2 + H(+) = heme b + CO2 + 2 H2O. The protein operates within porphyrin-containing compound metabolism; protoheme biosynthesis. Its function is as follows. Involved in coproporphyrin-dependent heme b biosynthesis. Catalyzes the decarboxylation of Fe-coproporphyrin III (coproheme) to heme b (protoheme IX), the last step of the pathway. The reaction occurs in a stepwise manner with a three-propionate intermediate. This Listeria innocua serovar 6a (strain ATCC BAA-680 / CLIP 11262) protein is Coproheme decarboxylase.